The primary structure comprises 312 residues: Plasma membrane-associated coenzyme Q6 reductase PGA3 (312 aa).

The Extracellular portion of the chain corresponds to 1-15 (MSKEDIEGTNILDEP). A helical membrane pass occupies residues 16–36 (VHGIYIPAALFVVGVAITTYM). Topologically, residues 37-39 (SGE) are cytoplasmic. The helical transmembrane segment at 40–60 (LKILWSLPILFMIIFVRAYSA) threads the bilayer. Over 61–179 (YKRRRSLYPD…LNYEPNSSKH (119 aa)) the chain is Extracellular. In terms of domain architecture, FAD-binding FR-type spans 70-173 (DRWTSLELED…KGPIGTLNYE (104 aa)). FAD is bound by residues 153-168 (AGLN…GPIG) and 179-211 (HLGI…KVSL). Residues 180–200 (LGIVAGGSGITPVLQILNEII) form a helical membrane-spanning segment. Residues 201–312 (TVPEDLTKVS…SSGDDQVFVF (112 aa)) lie on the Cytoplasmic side of the membrane.

The protein belongs to the flavoprotein pyridine nucleotide cytochrome reductase family. It depends on FAD as a cofactor.

It localises to the cell membrane. The protein localises to the endoplasmic reticulum membrane. It carries out the reaction 2 Fe(III)-[cytochrome b5] + NADH = 2 Fe(II)-[cytochrome b5] + NAD(+) + H(+). Inhibited by diphenylene iodonium (DPI). Functionally, NADH-dependent cytochrome b5 reductase that reduces coenzyme Q6 at the plasma membrane and mediates lifespan extension by calorie restriction by shifting fermentative to respiratory metabolism, probably through modulating the NAD(+)/NADH ratio. The chain is Plasma membrane-associated coenzyme Q6 reductase PGA3 (PGA3) from Saccharomyces cerevisiae (strain ATCC 204508 / S288c) (Baker's yeast).